A 353-amino-acid chain; its full sequence is DNA replication and repair protein RecF (353 aa).

Position 30–37 (30–37 (GANGQGKT)) interacts with ATP.

Belongs to the RecF family.

It localises to the cytoplasm. Functionally, the RecF protein is involved in DNA metabolism; it is required for DNA replication and normal SOS inducibility. RecF binds preferentially to single-stranded, linear DNA. It also seems to bind ATP. This Carboxydothermus hydrogenoformans (strain ATCC BAA-161 / DSM 6008 / Z-2901) protein is DNA replication and repair protein RecF.